Consider the following 306-residue polypeptide: Pre-mRNA-splicing factor cwf26 (306 aa).

The tract at residues 130–152 is disordered; the sequence is KAEERRKREEKSSNLDEEELRKS. A coiled-coil region spans residues 130–198; the sequence is KAEERRKREE…KEQQQGVVQV (69 aa).

This sequence belongs to the CWC26 family. In terms of assembly, belongs to the 40S cdc5-associated complex (or cwf complex), a spliceosome sub-complex reminiscent of a late-stage spliceosome composed of the U2, U5 and U6 snRNAs and at least brr2, cdc5, cwf2/prp3, cwf3/syf1, cwf4/syf3, cwf5/ecm2, spp42/cwf6, cwf7/spf27, cwf8, cwf9, cwf10, cwf11, cwf12, prp45/cwf13, cwf14, cwf15, cwf16, cwf17, cwf18, cwf19, cwf20, cwf21, cwf22, cwf23, cwf24, cwf25, cwf26, cyp7/cwf27, cwf28, cwf29/ist3, lea1, msl1, prp5/cwf1, prp10, prp12/sap130, prp17, prp22, sap61, sap62, sap114, sap145, slu7, smb1, smd1, smd3, smf1, smg1 and syf2.

It is found in the cytoplasm. The protein resides in the nucleus. Its function is as follows. Involved in mRNA splicing. The protein is Pre-mRNA-splicing factor cwf26 (cwf26) of Schizosaccharomyces pombe (strain 972 / ATCC 24843) (Fission yeast).